Consider the following 908-residue polypeptide: 26S proteasome non-ATPase regulatory subunit 2 (908 aa).

Position 1 is an N-acetylmethionine (M1). The tract at residues 1–52 (MEEGGRDKAPVQPQQSPAAAPGGTDEKPSGKERRDAGDKDKEQELSEEDKQL) is disordered. A compositionally biased stretch (low complexity) spans 10 to 21 (PVQPQQSPAAAP). A Phosphoserine modification is found at S16. Residue T24 is modified to Phosphothreonine. Residues 24 to 52 (TDEKPSGKERRDAGDKDKEQELSEEDKQL) are compositionally biased toward basic and acidic residues. Phosphoserine occurs at positions 29 and 147. Y194 is subject to Phosphotyrosine. 2 positions are modified to phosphoserine: S361 and S363. 5 PC repeats span residues 409 to 442 (SAAA…YIKS), 443 to 479 (GALL…TMRL), 480 to 514 (GSIF…SMEV), 517 to 551 (VTAL…TELK), and 560 to 589 (LGLG…PFRS). Residue K551 is modified to N6-acetyllysine. The segment covering 623 to 643 (KEKEEDKDKKEKKDKDKKEAP) has biased composition (basic and acidic residues). The interval 623 to 645 (KEKEEDKDKKEKKDKDKKEAPAD) is disordered. 2 PC repeats span residues 692–723 (LALA…EVSY) and 742–757 (AAML…KDPN). Positions 708-903 (DTLSKFSHDA…LEGFVILRKN (196 aa)) are required for interaction with UBLCP1.

Belongs to the proteasome subunit S2 family. As to quaternary structure, component of the 19S proteasome regulatory particle complex. The 26S proteasome consists of a 20S core particle (CP) and two 19S regulatory subunits (RP). The regulatory particle is made of a lid composed of 9 subunits, a base containing 6 ATPases and few additional components including PSMD2. Interacts with RPGRIP1L. Interacts with CRY1 in a KDM8-dependent manner. Interacts (via C-terminus) with phosphatase UBLCP1 (via ubiquitin-like domain); the interaction recruits UBLCP1 to the 19S regulatory particle where it dephosphorylates 19S subunit PSMC2/RPT1 which impairs PSMC2 ATPase activity and disrupts 26S proteasome assembly. In terms of tissue distribution, found in skeletal muscle, liver, heart, brain, kidney, pancreas, lung and placenta.

In terms of biological role, component of the 26S proteasome, a multiprotein complex involved in the ATP-dependent degradation of ubiquitinated proteins. This complex plays a key role in the maintenance of protein homeostasis by removing misfolded or damaged proteins, which could impair cellular functions, and by removing proteins whose functions are no longer required. Therefore, the proteasome participates in numerous cellular processes, including cell cycle progression, apoptosis, or DNA damage repair. Its function is as follows. Binds to the intracellular domain of tumor necrosis factor type 1 receptor. The binding domain of TRAP1 and TRAP2 resides outside the death domain of TNFR1. The polypeptide is 26S proteasome non-ATPase regulatory subunit 2 (PSMD2) (Homo sapiens (Human)).